Reading from the N-terminus, the 341-residue chain is Anthranilate phosphoribosyltransferase (341 aa).

5-phospho-alpha-D-ribose 1-diphosphate-binding positions include Gly81, 84–85, Thr89, 91–94, 109–117, and Thr121; these read GD, NIST, and KHGNRKASS. Gly81 provides a ligand contact to anthranilate. Ser93 lines the Mg(2+) pocket. Asn112 contributes to the anthranilate binding site. Arg167 serves as a coordination point for anthranilate. 2 residues coordinate Mg(2+): Asp226 and Glu227.

It belongs to the anthranilate phosphoribosyltransferase family. In terms of assembly, homodimer. Mg(2+) serves as cofactor.

The catalysed reaction is N-(5-phospho-beta-D-ribosyl)anthranilate + diphosphate = 5-phospho-alpha-D-ribose 1-diphosphate + anthranilate. The protein operates within amino-acid biosynthesis; L-tryptophan biosynthesis; L-tryptophan from chorismate: step 2/5. In terms of biological role, catalyzes the transfer of the phosphoribosyl group of 5-phosphorylribose-1-pyrophosphate (PRPP) to anthranilate to yield N-(5'-phosphoribosyl)-anthranilate (PRA). This is Anthranilate phosphoribosyltransferase from Parvibaculum lavamentivorans (strain DS-1 / DSM 13023 / NCIMB 13966).